We begin with the raw amino-acid sequence, 137 residues long: Large ribosomal subunit protein uL16 (137 aa).

It belongs to the universal ribosomal protein uL16 family. In terms of assembly, part of the 50S ribosomal subunit.

Binds 23S rRNA and is also seen to make contacts with the A and possibly P site tRNAs. This is Large ribosomal subunit protein uL16 from Pseudomonas fluorescens (strain Pf0-1).